We begin with the raw amino-acid sequence, 492 residues long: T-box transcription factor TBX5-A (492 aa).

The tract at residues 1-43 is disordered; the sequence is MADSEDTFRLQNSPSDSEPKDLQNEGKSDKQNAAVSKSPSSQT. The span at 17–30 shows a compositional bias: basic and acidic residues; sequence SEPKDLQNEGKSDK. Polar residues predominate over residues 31–43; that stretch reads QNAAVSKSPSSQT. Positions 62–237 form a DNA-binding region, T-box; it reads LWTKFHEVGT…NNPFAKGFRG (176 aa). The disordered stretch occupies residues 331 to 352; the sequence is AGEHPYKKPYVESSSSEDDHYY.

In terms of assembly, monomer. Homodimer (via the T-box); binds DNA as homodimer. As to expression, expressed in the dorsal optic cup of developing eye, pectoral fin buds and heart. At 31 hpf, when the pectoral fin buds have begun bulging outwards, restricted expression is detected throughout the mesenchyme of the early fin buds and these high levels of expression continue until later stages.

It localises to the nucleus. The protein resides in the cytoplasm. In terms of biological role, required for pectoral fin formation. Together with tbx5b, involved in eye and heart development. Required for the looping stage of heart development. May bind to the core DNA motif of promoters. The sequence is that of T-box transcription factor TBX5-A (tbx5a) from Danio rerio (Zebrafish).